The primary structure comprises 250 residues: Zinc finger protein lsy-27 (250 aa).

C2H2-type zinc fingers lie at residues 25–48 (FVCS…QLMH) and 52–75 (HTCM…RNEH). The C2H2-type 3; degenerate zinc finger occupies 81–104 (FTCGCCNWTFASKRQLTEHTKCIQ). 2 disordered regions span residues 126–177 (IQST…EAER) and 226–250 (QKVK…QEIE). The segment covering 148–165 (SLSPSSSVSTSISSRDAS) has biased composition (low complexity). Residues 239–250 (MIPEKHVKQEIE) are compositionally biased toward basic and acidic residues.

In terms of biological role, involved in regulating left/right asymmetric differentiation of the gustatory ASE neurons. Plays a role in modulating expression of LIM/homeobox protein lim-6. The sequence is that of Zinc finger protein lsy-27 from Caenorhabditis elegans.